A 305-amino-acid polypeptide reads, in one-letter code: Methionyl-tRNA formyltransferase (305 aa).

111–114 (SLLP) contributes to the (6S)-5,6,7,8-tetrahydrofolate binding site.

It belongs to the Fmt family.

The enzyme catalyses L-methionyl-tRNA(fMet) + (6R)-10-formyltetrahydrofolate = N-formyl-L-methionyl-tRNA(fMet) + (6S)-5,6,7,8-tetrahydrofolate + H(+). Its function is as follows. Attaches a formyl group to the free amino group of methionyl-tRNA(fMet). The formyl group appears to play a dual role in the initiator identity of N-formylmethionyl-tRNA by promoting its recognition by IF2 and preventing the misappropriation of this tRNA by the elongation apparatus. The chain is Methionyl-tRNA formyltransferase from Helicobacter pylori (strain HPAG1).